The chain runs to 190 residues: Potassium-transporting ATPase KdpC subunit (190 aa).

Residues 10 to 30 (TFIFLLLITGGVYPLLTTVLG) traverse the membrane as a helical segment.

This sequence belongs to the KdpC family. In terms of assembly, the system is composed of three essential subunits: KdpA, KdpB and KdpC.

The protein localises to the cell inner membrane. Functionally, part of the high-affinity ATP-driven potassium transport (or Kdp) system, which catalyzes the hydrolysis of ATP coupled with the electrogenic transport of potassium into the cytoplasm. This subunit acts as a catalytic chaperone that increases the ATP-binding affinity of the ATP-hydrolyzing subunit KdpB by the formation of a transient KdpB/KdpC/ATP ternary complex. This Escherichia coli (strain 55989 / EAEC) protein is Potassium-transporting ATPase KdpC subunit.